A 179-amino-acid chain; its full sequence is Interleukin-10 (179 aa).

An N-terminal signal peptide occupies residues 1 to 19 (MPSPALLCCCLVLLAGVGA). 2 cysteine pairs are disulfide-bonded: cysteine 31/cysteine 127 and cysteine 81/cysteine 133. The N-linked (GlcNAc...) asparagine glycan is linked to asparagine 135.

It belongs to the IL-10 family. Homodimer. Interacts with IL10RA and IL10RB.

It localises to the secreted. Functionally, major immune regulatory cytokine that acts on many cells of the immune system where it has profound anti-inflammatory functions, limiting excessive tissue disruption caused by inflammation. Mechanistically, IL10 binds to its heterotetrameric receptor comprising IL10RA and IL10RB leading to JAK1 and STAT2-mediated phosphorylation of STAT3. In turn, STAT3 translocates to the nucleus where it drives expression of anti-inflammatory mediators. Targets antigen-presenting cells (APCs) such as macrophages and monocytes and inhibits their release of pro-inflammatory cytokines including granulocyte-macrophage colony-stimulating factor /GM-CSF, granulocyte colony-stimulating factor/G-CSF, IL-1 alpha, IL-1 beta, IL-6, IL-8 and TNF-alpha. Also interferes with antigen presentation by reducing the expression of MHC-class II and co-stimulatory molecules, thereby inhibiting their ability to induce T cell activation. In addition, controls the inflammatory response of macrophages by reprogramming essential metabolic pathways including mTOR signaling. This chain is Interleukin-10 (IL10), found in Vulpes vulpes (Red fox).